A 536-amino-acid polypeptide reads, in one-letter code: Arginine--tRNA ligase (536 aa).

Positions 119–129 (ANPTGFLHIGH) match the 'HIGH' region motif.

Belongs to the class-I aminoacyl-tRNA synthetase family. As to quaternary structure, monomer.

Its subcellular location is the cytoplasm. The enzyme catalyses tRNA(Arg) + L-arginine + ATP = L-arginyl-tRNA(Arg) + AMP + diphosphate. The protein is Arginine--tRNA ligase of Mycoplasma mobile (strain ATCC 43663 / 163K / NCTC 11711) (Mesomycoplasma mobile).